The chain runs to 146 residues: Putative actin-depolymerizing factor 8 (146 aa).

An ADF-H domain is found at 14-144 (PAWIEVPEKS…DLEVLRGRAN (131 aa)).

This sequence belongs to the actin-binding proteins ADF family.

Functionally, actin-depolymerizing protein. Severs actin filaments (F-actin) and binds to actin monomers. The polypeptide is Putative actin-depolymerizing factor 8 (ADF8) (Oryza sativa subsp. japonica (Rice)).